A 175-amino-acid chain; its full sequence is Adenine phosphoribosyltransferase (175 aa).

It belongs to the purine/pyrimidine phosphoribosyltransferase family. Homodimer.

The protein resides in the cytoplasm. The catalysed reaction is AMP + diphosphate = 5-phospho-alpha-D-ribose 1-diphosphate + adenine. It participates in purine metabolism; AMP biosynthesis via salvage pathway; AMP from adenine: step 1/1. Catalyzes a salvage reaction resulting in the formation of AMP, that is energically less costly than de novo synthesis. In Oenococcus oeni (strain ATCC BAA-331 / PSU-1), this protein is Adenine phosphoribosyltransferase.